The sequence spans 952 residues: Chaperone protein ClpC2, chloroplastic (952 aa).

The transit peptide at 1 to 45 (MAWSIALLTPPFFGPGRHVQAKEYREPRGCVMKMSSLKAPVLRIQ) directs the protein to the chloroplast. One can recognise a Clp R domain in the interval 115 to 257 (FERFTEKAIK…RTQVIRMVGE (143 aa)). 2 repeat regions span residues 118-183 (FTEK…IGRG) and 193-257 (FTPR…MVGE). The tract at residues 278-525 (LEEYGTNLTK…RVRLRHAQLP (248 aa)) is i. ATP is bound at residue 323-330 (GEPGVGKT). The region spanning 532–567 (EKQLRQITKEKNEAVRSQDFEMAGSHRDREIELKAE) is the UVR domain. Positions 592 to 783 (VTESDIQHIV…LLIMTSNVGS (192 aa)) are II. 666-673 (GPTGVGKS) contributes to the ATP binding site.

The protein belongs to the ClpA/ClpB family. ClpC subfamily. Homodimer and homohexamer. Hexamerization upon addition of ATP. Interacts with CLPT1. Interacts with CLPS1. Stably associated with the import machinery. Interacts with CLPF. The cofactor is Mg(2+). Expressed at low levels in roots and inflorescences. Expressed at very low levels in rosette leaves. Expressed in photosynthetic green tissues with high levels in young, developing leaf tissues.

The protein localises to the plastid. Its subcellular location is the chloroplast stroma. It localises to the chloroplast membrane. It carries out the reaction ATP + H2O = ADP + phosphate + H(+). Functionally, molecular chaperone. May act as a suppressor of FtsH-mediated thylakoid membrane biogenesis and may enhance photoinhibition. Seems not involved in chloroplastic protein import. Probable component of the TIC-associated stromal import motor involved in inner membrane translocation. Has an ATPase activity, but no ADPase activity. Interacts with transit peptides with a positional preference. Localization of the signal sequence at the N-terminal end of a protein seems mandatory for interaction to take place. This Arabidopsis thaliana (Mouse-ear cress) protein is Chaperone protein ClpC2, chloroplastic.